The following is a 234-amino-acid chain: uncharacterized protein (234 aa).

The next 2 helical transmembrane spans lie at 20–40 and 176–196; these read LILL…FKVI and VMAF…LHFL.

This sequence belongs to the CpsC/CapA family.

It is found in the cell membrane. This is an uncharacterized protein from Bacillus subtilis (strain 168).